A 445-amino-acid chain; its full sequence is Histidine--tRNA ligase (445 aa).

The protein belongs to the class-II aminoacyl-tRNA synthetase family. As to quaternary structure, homodimer.

The protein localises to the cytoplasm. It catalyses the reaction tRNA(His) + L-histidine + ATP = L-histidyl-tRNA(His) + AMP + diphosphate + H(+). In Mycoplasma mobile (strain ATCC 43663 / 163K / NCTC 11711) (Mesomycoplasma mobile), this protein is Histidine--tRNA ligase.